We begin with the raw amino-acid sequence, 493 residues long: Endoglucanase 23 (493 aa).

An N-terminal signal peptide occupies residues 1–23 (MKASIYLVTVFILLLLLLPTAIP). The Nucleophile role is filled by Asp78. N-linked (GlcNAc...) asparagine glycosylation occurs at Asn297. Residue His410 is part of the active site. N-linked (GlcNAc...) asparagine glycosylation is present at Asn465. Glu470 is a catalytic residue.

It belongs to the glycosyl hydrolase 9 (cellulase E) family.

Its subcellular location is the secreted. The enzyme catalyses Endohydrolysis of (1-&gt;4)-beta-D-glucosidic linkages in cellulose, lichenin and cereal beta-D-glucans.. This is Endoglucanase 23 from Arabidopsis thaliana (Mouse-ear cress).